The primary structure comprises 125 residues: Ixonnexin (125 aa).

An N-terminal signal peptide occupies residues 1–21; that stretch reads MGLTGTTLVLVCVAFFGSAAA. An N-linked (GlcNAc...) asparagine glycan is attached at Asn26. Residues 81–125 are disordered; that stretch reads TSSGGPDDTGDNTPPPTEKPKQKKKKPKKTKKPKRKSKKDQKENF. The segment covering 101–119 has biased composition (basic residues); the sequence is KQKKKKPKKTKKPKRKSKK.

It belongs to the salp14 family. Homodimer. Interacts with host PLG. Interacts with host PLAT. As to expression, saliva (at protein level).

The protein localises to the secreted. Its function is as follows. Salivary protein that promotes host fibrinolysis via accelerating host plasmin generation from plasminogen (PLG) initiated by tPA/tissue-type plasminogen activator (PLAT). Does not affect urokinase (PLAU)-mediated fibrinolysis in the host. Enhances amidolytic activity of host coagulation factor Xa (F10). The chain is Ixonnexin from Ixodes scapularis (Black-legged tick).